The sequence spans 363 residues: MTALQNDTFLRALRRQPTEYTPLWLMRQAGRYLPEYNATRARAGSFLGLAKNPAYATEVTLQPLDRYPLDAAILFSDILTVPDAMGLGLSFAQGEGPRFAHPLRTEADVQKLAVPDMASLQYVFDAVSEIRRALVQDGRQRVPLIGFSGSPWTLACYMVEGGGSDDFRTVKAMMYGRPDLMHRILEINAQAVTEYLNAQIEAGAQAVMIFDTWGGALADGMYQAFSLAYMRRVLAGLKREHDGQQVPAIVFTKGGGLWLEALADTGADAIGLDWTVNLAEARRRTGGRVALQGNIDPTVLFAPEAAIREQVRGVLDSYAAAGGSDGHVFNLGHGISQFTPPDNVSVLVDEVHRHSRKLRAGQK.

Residues 27-31 (RQAGR), Asp77, Tyr157, Thr212, and His333 contribute to the substrate site.

This sequence belongs to the uroporphyrinogen decarboxylase family. As to quaternary structure, homodimer.

It is found in the cytoplasm. It carries out the reaction uroporphyrinogen III + 4 H(+) = coproporphyrinogen III + 4 CO2. Its pathway is porphyrin-containing compound metabolism; protoporphyrin-IX biosynthesis; coproporphyrinogen-III from 5-aminolevulinate: step 4/4. Functionally, catalyzes the decarboxylation of four acetate groups of uroporphyrinogen-III to yield coproporphyrinogen-III. This is Uroporphyrinogen decarboxylase from Cupriavidus necator (strain ATCC 17699 / DSM 428 / KCTC 22496 / NCIMB 10442 / H16 / Stanier 337) (Ralstonia eutropha).